An 892-amino-acid chain; its full sequence is Putative disease resistance protein At4g10780 (892 aa).

A coiled-coil region spans residues 24–63 (SLGNYIHKLKDNIVALEKAIEDLTATRDDVLRRVQMEEGK). The NB-ARC domain occupies 137 to 440 (IVAAPAPKLE…ICEGFIDGNI (304 aa)). 180–187 (GMGGVGKT) provides a ligand contact to ATP. LRR repeat units follow at residues 515-536 (AVRR…PECP), 537-559 (ELTT…FFRH), 562-584 (KLVV…ISEL), 586-608 (ALRY…QDLK), 609-631 (TLIH…SKLS), and 632-654 (SLRT…KELH).

The protein belongs to the disease resistance NB-LRR family.

Potential disease resistance protein. This is Putative disease resistance protein At4g10780 from Arabidopsis thaliana (Mouse-ear cress).